A 633-amino-acid polypeptide reads, in one-letter code: Threonine--tRNA ligase (633 aa).

Residues 1 to 61 form the TGS domain; that stretch reads MINISFPDGS…DNDCRLRILT (61 aa). The interval 242–533 is catalytic; sequence DHRKLGKELD…LIEEYAGRFP (292 aa). Zn(2+) contacts are provided by C333, H384, and H510.

It belongs to the class-II aminoacyl-tRNA synthetase family. As to quaternary structure, homodimer. Zn(2+) is required as a cofactor.

It localises to the cytoplasm. The catalysed reaction is tRNA(Thr) + L-threonine + ATP = L-threonyl-tRNA(Thr) + AMP + diphosphate + H(+). Catalyzes the attachment of threonine to tRNA(Thr) in a two-step reaction: L-threonine is first activated by ATP to form Thr-AMP and then transferred to the acceptor end of tRNA(Thr). Also edits incorrectly charged L-seryl-tRNA(Thr). The polypeptide is Threonine--tRNA ligase (Rickettsia bellii (strain OSU 85-389)).